The sequence spans 166 residues: Transcription antitermination protein NusB (166 aa).

Belongs to the NusB family.

Its function is as follows. Involved in transcription antitermination. Required for transcription of ribosomal RNA (rRNA) genes. Binds specifically to the boxA antiterminator sequence of the ribosomal RNA (rrn) operons. This Chromohalobacter salexigens (strain ATCC BAA-138 / DSM 3043 / CIP 106854 / NCIMB 13768 / 1H11) protein is Transcription antitermination protein NusB.